Consider the following 259-residue polypeptide: Ribonuclease HII (259 aa).

The 188-residue stretch at 72-259 (ERIAGIDEAG…PVREALGVQS (188 aa)) folds into the RNase H type-2 domain. A divalent metal cation is bound by residues Asp78, Glu79, and Asp170.

This sequence belongs to the RNase HII family. Mn(2+) serves as cofactor. It depends on Mg(2+) as a cofactor.

It localises to the cytoplasm. The catalysed reaction is Endonucleolytic cleavage to 5'-phosphomonoester.. In terms of biological role, endonuclease that specifically degrades the RNA of RNA-DNA hybrids. This is Ribonuclease HII from Geobacillus thermodenitrificans (strain NG80-2).